The primary structure comprises 98 residues: Small ribosomal subunit protein bTHXm (98 aa).

The N-terminal 35 residues, 1–35 (MAAMQWCGAMTRRIMMTQRTSAALNCSARYSSLSP), are a transit peptide targeting the mitochondrion. The disordered stretch occupies residues 52 to 71 (DKKTKKGKRFKGSYGNSRGK). The segment covering 53–62 (KKTKKGKRFK) has biased composition (basic residues).

It belongs to the bacterial ribosomal protein bTHX family. Component of the mitochondrial ribosome small subunit.

It is found in the mitochondrion. The protein is Small ribosomal subunit protein bTHXm of Arabidopsis thaliana (Mouse-ear cress).